A 64-amino-acid chain; its full sequence is MLLYIVIIVAYVSYKLVPKQYWPILMFMAYMVYTHEKLDINERSGFWKYIIAKLFRCHGCEICK.

This is an uncharacterized protein from African swine fever virus (strain Badajoz 1971 Vero-adapted) (Ba71V).